Reading from the N-terminus, the 214-residue chain is Large ribosomal subunit protein uL4c (214 aa).

The disordered stretch occupies residues 42-81 (VKQSNEKRQGSANTKTRSEVRGGGRKPWRQKGTGRARAGS). Positions 64–75 (GGRKPWRQKGTG) are enriched in basic residues.

It belongs to the universal ribosomal protein uL4 family. Part of the 50S ribosomal subunit.

The protein localises to the plastid. It localises to the chloroplast. Its function is as follows. Probably binds the 23S rRNA. The polypeptide is Large ribosomal subunit protein uL4c (rpl4) (Pyropia yezoensis (Susabi-nori)).